We begin with the raw amino-acid sequence, 553 residues long: Copine-9 (553 aa).

2 C2 domains span residues 1 to 125 (MSLG…ERTL) and 132 to 255 (KCGT…FTVY). Asn95 is a glycosylation site (N-linked (GlcNAc...) asparagine). Positions 163, 169, 225, 227, and 233 each coordinate Ca(2+). One can recognise a VWFA domain in the interval 299 to 500 (NFTVAIDFTA…VQFVPFRDYV (202 aa)). Residues 531–553 (TRDIQPRPPPPANPSPIPAPEQP) are disordered. The span at 536-553 (PRPPPPANPSPIPAPEQP) shows a compositional bias: pro residues.

The protein belongs to the copine family. Ca(2+) serves as cofactor. Expressed in melanocytes.

Its function is as follows. Probable calcium-dependent phospholipid-binding protein that may play a role in calcium-mediated intracellular processes. Plays a role in dendrite formation by melanocytes. The sequence is that of Copine-9 from Homo sapiens (Human).